A 374-amino-acid chain; its full sequence is tRNA-specific 2-thiouridylase MnmA (374 aa).

Residues 12–19 (GMSGGVDS) and Met38 each bind ATP. The interval 98 to 100 (NPD) is interaction with target base in tRNA. Cys103 (nucleophile) is an active-site residue. The cysteines at positions 103 and 202 are disulfide-linked. Gly128 is an ATP binding site. The segment at 152-154 (KDQ) is interaction with tRNA. Catalysis depends on Cys202, which acts as the Cysteine persulfide intermediate. The tract at residues 316–317 (RY) is interaction with tRNA.

The protein belongs to the MnmA/TRMU family.

The protein localises to the cytoplasm. It carries out the reaction S-sulfanyl-L-cysteinyl-[protein] + uridine(34) in tRNA + AH2 + ATP = 2-thiouridine(34) in tRNA + L-cysteinyl-[protein] + A + AMP + diphosphate + H(+). In terms of biological role, catalyzes the 2-thiolation of uridine at the wobble position (U34) of tRNA, leading to the formation of s(2)U34. This is tRNA-specific 2-thiouridylase MnmA from Vibrio vulnificus (strain CMCP6).